The primary structure comprises 457 residues: Peptidyl-prolyl cis-trans isomerase FKBP5 (457 aa).

Met-1 is subject to N-acetylmethionine. The span at 1-11 (MTTDEGAKSSR) shows a compositional bias: basic and acidic residues. The disordered stretch occupies residues 1–28 (MTTDEGAKSSRENPAATVAEQGEDVTSK). At Lys-28 the chain carries N6-acetyllysine. PPIase FKBP-type domains are found at residues 50-138 (GDKV…LNFK) and 165-251 (GARV…KSFE). 3 TPR repeats span residues 268 to 301 (AAIVKEEGTVYFKGGKYVQAVIQYGKIVSWLEME), 317 to 350 (LAAFLNLAMCYLKLREYAKAVECCDKALGLDSAN), and 351 to 384 (EKGLYRRGEAQLLMNEFESAKGDFEKVLEVNPQN). The disordered stretch occupies residues 424–457 (EANKAVSKKTSEGVTNEKLTVSHAVEEEKPEGHV). Position 445 is a phosphoserine (Ser-445). Positions 447–457 (AVEEEKPEGHV) are enriched in basic and acidic residues.

Part of a heteromultimeric cytoplasmic complex with HSP90AA1, HSPA1A/HSPA1B and steroid receptors. Upon ligand binding dissociates from the complex and FKBP4 takes its place. Interacts with functionally mature heterooligomeric progesterone receptor complexes along with HSP90 and TEBP. Interacts with NR3C1. Interacts with Akt/AKT1 and PHLPP1; enhancing dephosphorylation and subsequent activation of Akt/AKT1. Interacts with IFI44L; this interaction modulates the kinase activity of IKBKB and IKBKE. Interacts with IKBKB and IKBKE. Post-translationally, acetylation impairs ability to promote interaction between Akt/AKT1 and PHLPP1. Deacetylation by SIRT7 promotes interaction between Akt/AKT1 and PHLPP1, leading to suppress Akt/AKT1 activation. In terms of processing, ubiquitinated, leading to degradation in a proteasome-dependent manner. Deubiquitinated by USP49, leading to stabilization.

Its subcellular location is the cytoplasm. The protein localises to the nucleus. The catalysed reaction is [protein]-peptidylproline (omega=180) = [protein]-peptidylproline (omega=0). Its activity is regulated as follows. Inhibited by both FK506 and rapamycin. Its function is as follows. Immunophilin protein with PPIase and co-chaperone activities. Component of unligated steroid receptors heterocomplexes through interaction with heat-shock protein 90 (HSP90). Plays a role in the intracellular trafficking of heterooligomeric forms of steroid hormone receptors maintaining the complex into the cytoplasm when unliganded. Acts as a regulator of Akt/AKT1 activity by promoting the interaction between Akt/AKT1 and PHLPP1, thereby enhancing dephosphorylation and subsequent activation of Akt/AKT1. Interacts with IKBKE and IKBKB which facilitates IKK complex assembly leading to increased IKBKE and IKBKB kinase activity, NF-kappaB activation, and IFN production. The chain is Peptidyl-prolyl cis-trans isomerase FKBP5 (FKBP5) from Saguinus oedipus (Cotton-top tamarin).